Reading from the N-terminus, the 348-residue chain is Thioesterase-like protein TwmA (348 aa).

It functions in the pathway secondary metabolite biosynthesis. Its function is as follows. Thioesterase-like protein; part of the gene cluster that mediates the biosynthesis of wortmanamides A and B, reduced long-chain polyketides amidated with a specific omega-amino acid, 5-aminopentanoic acid (5PA). The PKS modules of TwmB are involved in the synthesis of the polyketide backbone, whereas the non-canonical C domain of TwmB is a bonafide condensation domain that specifically selects 5PA and catalyzes amidation to release polyketide chain. The C domain clearly prefers C16 and C18 fatty acyl substrates, which is consistent with simultaneous formation of both octaketide and nonaketide acyl amides wortmanamides A and B. Because TwmB lacks a designated enoylreductase (ER) domain, the required activity is provided the enoyl reductase TwmE. The roles of the remaining enzymes have still to be clarified. The polypeptide is Thioesterase-like protein TwmA (Talaromyces wortmannii (Penicillium wortmannii)).